The chain runs to 356 residues: Serine/threonine-protein phosphatase 4 regulatory subunit 2 (356 aa).

Over residues 202 to 240 (NEGAGDDEDDDQDYVDEDSATSEDEEEDVEEEEEEEGPE) the composition is skewed to acidic residues. The interval 202-335 (NEGAGDDEDD…PQLTTSATNV (134 aa)) is disordered. Positions 326–335 (PQLTTSATNV) are enriched in polar residues.

The protein belongs to the PPP4R2 family. In terms of assembly, regulatory subunit (R2) of the histone H2A phosphatase complex (HTP-C) consisting of PPH3, PSY2 and PSY4.

Its subcellular location is the nucleus. Regulatory subunit of the histone H2A phosphatase complex, which dephosphorylates H2AS128ph (gamma-H2A) that has been displaced from sites of DNA lesions in the double-stranded DNA break repair process. Dephosphorylation is necessary for efficient recovery from the DNA damage checkpoint. The sequence is that of Serine/threonine-protein phosphatase 4 regulatory subunit 2 (PSY4) from Eremothecium gossypii (strain ATCC 10895 / CBS 109.51 / FGSC 9923 / NRRL Y-1056) (Yeast).